The sequence spans 561 residues: Amidophosphoribosyltransferase 2, chloroplastic (561 aa).

A compositionally biased stretch (low complexity) spans 1 to 27; sequence MAATSSISSSLSLNAKPNKLSNNNNNN. The tract at residues 1–36 is disordered; sequence MAATSSISSSLSLNAKPNKLSNNNNNNKPHRFLRNP. Residues 1–53 constitute a chloroplast transit peptide; sequence MAATSSISSSLSLNAKPNKLSNNNNNNKPHRFLRNPFLNPSSSSFSPLPASIS. Cysteine 87 serves as the catalytic Nucleophile. The Glutamine amidotransferase type-2 domain occupies 87–307; sequence CGVVGIYGDS…PGEVLVVDKD (221 aa). [4Fe-4S] cluster contacts are provided by cysteine 323, cysteine 469, cysteine 520, and cysteine 523.

In the C-terminal section; belongs to the purine/pyrimidine phosphoribosyltransferase family. The cofactor is [4Fe-4S] cluster. Mg(2+) serves as cofactor. Mostly expressed in leaves, and, to a lower extent, in cotyledons.

It is found in the plastid. The protein resides in the chloroplast stroma. It carries out the reaction 5-phospho-beta-D-ribosylamine + L-glutamate + diphosphate = 5-phospho-alpha-D-ribose 1-diphosphate + L-glutamine + H2O. It participates in purine metabolism; IMP biosynthesis via de novo pathway; N(1)-(5-phospho-D-ribosyl)glycinamide from 5-phospho-alpha-D-ribose 1-diphosphate: step 1/2. Inhibited by the phenyltriazole acetic acid compound [5-(4-chlorophenyl)-1-isopropyl-1H-[1,2,4]triazol-3-yl]-acetic acid (DAS734), a bleaching herbicide. Its function is as follows. Catalyzes the first committed step of 'de novo purine biosynthesis from glutamine. Required for chloroplast biogenesis and cell division. Confers sensitivity to the phenyltriazole acetic acid compound [5-(4-chlorophenyl)-1-isopropyl-1H-[1,2,4]triazol-3-yl]-acetic acid (DAS734), a bleaching herbicide. This Arabidopsis thaliana (Mouse-ear cress) protein is Amidophosphoribosyltransferase 2, chloroplastic (ASE2).